The chain runs to 95 residues: Co-chaperonin GroES (95 aa).

It belongs to the GroES chaperonin family. Heptamer of 7 subunits arranged in a ring. Interacts with the chaperonin GroEL.

The protein localises to the cytoplasm. Functionally, together with the chaperonin GroEL, plays an essential role in assisting protein folding. The GroEL-GroES system forms a nano-cage that allows encapsulation of the non-native substrate proteins and provides a physical environment optimized to promote and accelerate protein folding. GroES binds to the apical surface of the GroEL ring, thereby capping the opening of the GroEL channel. The polypeptide is Co-chaperonin GroES (Chlorobium phaeobacteroides (strain DSM 266 / SMG 266 / 2430)).